Reading from the N-terminus, the 550-residue chain is Chaperonin GroEL (550 aa).

ATP-binding positions include 30 to 33, Lys-51, 87 to 91, Gly-415, 479 to 481, and Asp-495; these read TLGP, DGTTT, and NAA. Residues 526–550 are disordered; that stretch reads KDEKSDLGNSSAPSAGGMGGMGGMM. Positions 541–550 are enriched in gly residues; that stretch reads GGMGGMGGMM.

This sequence belongs to the chaperonin (HSP60) family. As to quaternary structure, forms a cylinder of 14 subunits composed of two heptameric rings stacked back-to-back. Interacts with the co-chaperonin GroES.

Its subcellular location is the cytoplasm. It carries out the reaction ATP + H2O + a folded polypeptide = ADP + phosphate + an unfolded polypeptide.. Its function is as follows. Together with its co-chaperonin GroES, plays an essential role in assisting protein folding. The GroEL-GroES system forms a nano-cage that allows encapsulation of the non-native substrate proteins and provides a physical environment optimized to promote and accelerate protein folding. The polypeptide is Chaperonin GroEL (Buchnera aphidicola subsp. Baizongia pistaciae (strain Bp)).